Reading from the N-terminus, the 270-residue chain is MDLFQATILGIVQGLTEVLPISSSAHLILIPTFLKWPESGITFDVALHLGTFIALCLYFWRDLIELASDFFTGMADWKHQPTSRRLPFYIIAGTFPAAIVGKLFETTIEELFRKSPSLIALFLIVFALLLAFADTSGSKKWKIEAITLKSAIIIGLAQCLALIPGVSRSGITITAALLLGFNREAAARFSFLLSLPIVAGAALFELSGLLKTGIPPSDVAPLLIGIATSAVFGYISVAFLLKMVQRSSLYPFVWYRIAIGCLALVFINFG.

Helical transmembrane passes span 14–34, 40–60, 88–108, 117–137, 146–166, 189–209, 221–241, and 249–269; these read GLTE…PTFL, GITF…LYFW, FYII…ETTI, SLIA…DTSG, ITLK…IPGV, FSFL…LSGL, PLLI…AFLL, and LYPF…FINF.

It belongs to the UppP family.

It is found in the cell inner membrane. It catalyses the reaction di-trans,octa-cis-undecaprenyl diphosphate + H2O = di-trans,octa-cis-undecaprenyl phosphate + phosphate + H(+). Catalyzes the dephosphorylation of undecaprenyl diphosphate (UPP). Confers resistance to bacitracin. The protein is Undecaprenyl-diphosphatase of Geotalea daltonii (strain DSM 22248 / JCM 15807 / FRC-32) (Geobacter daltonii).